The chain runs to 90 residues: Probable acyl carrier protein (90 aa).

Residues 9–90 form the Carrier domain; it reads QVTVEELSAL…LVNGALKTGV (82 aa). O-(pantetheine 4'-phosphoryl)serine is present on serine 47.

4'-phosphopantetheine is transferred from CoA to a specific serine of the apo-ACP-like protein.

Its function is as follows. Involved in developmentally regulated synthesis of a compound biosynthetically related to polyketide antibiotics which is essential for spore color in Streptomyces coelicolor. The chain is Probable acyl carrier protein from Streptomyces coelicolor (strain ATCC BAA-471 / A3(2) / M145).